The chain runs to 547 residues: Elongator complex protein 3 (547 aa).

Residues 82 to 372 (RTASGIAVVA…YRVQRDIPMP (291 aa)) enclose the Radical SAM core domain. The [4Fe-4S] cluster site is built by C99, C109, and C112. A Phosphoserine modification is found at S161. Acetyl-CoA is bound at residue K164. K229 bears the N6-methyllysine mark. At Y251 the chain carries Phosphotyrosine. In terms of domain architecture, N-acetyltransferase spans 396-547 (IQCRDVRTRE…QGPYMVKMLK (152 aa)). Residues 474 to 477 (ELHV), 497 to 499 (FGM), and Y530 contribute to the acetyl-CoA site.

It belongs to the ELP3 family. Component of the elongator complex which consists of ELP1, ELP2, ELP3, ELP4, ELP5 and ELP6. ELP1, ELP2 and ELP3 form the elongator core complex. Interacts with alpha-tubulin. The cofactor is [4Fe-4S] cluster. Post-translationally, tyrosine-phosphorylated. Also serine/threonine-phosphorylated.

The protein resides in the cytoplasm. It is found in the nucleus. It carries out the reaction uridine(34) in tRNA + acetyl-CoA + S-adenosyl-L-methionine + H2O = 5-(carboxymethyl)uridine(34) in tRNA + 5'-deoxyadenosine + L-methionine + CoA + 2 H(+). It functions in the pathway tRNA modification; 5-methoxycarbonylmethyl-2-thiouridine-tRNA biosynthesis. In terms of biological role, catalytic tRNA acetyltransferase subunit of the elongator complex which is required for multiple tRNA modifications, including mcm5U (5-methoxycarbonylmethyl uridine), mcm5s2U (5-methoxycarbonylmethyl-2-thiouridine), and ncm5U (5-carbamoylmethyl uridine). In the elongator complex, acts as a tRNA uridine(34) acetyltransferase by mediating formation of carboxymethyluridine in the wobble base at position 34 in tRNAs. May also act as a protein lysine acetyltransferase by mediating acetylation of target proteins; such activity is however unclear in vivo and recent evidences suggest that ELP3 primarily acts as a tRNA acetyltransferase. Involved in neurogenesis: regulates the migration and branching of projection neurons in the developing cerebral cortex, through a process depending on alpha-tubulin acetylation. Required for acetylation of GJA1 in the developing cerebral cortex. The polypeptide is Elongator complex protein 3 (Mus musculus (Mouse)).